The chain runs to 301 residues: Protoheme IX farnesyltransferase (301 aa).

9 helical membrane-spanning segments follow: residues 29 to 49 (VVALMLLTVLVGMCLAVPGVV), 51 to 71 (IVPLIAGMAGIGMMAGSAAAF), 96 to 118 (VSIAKALTFSCSLGILGFVVLYV), 123 to 143 (LTAWLTFASLIGYAVVYTAYL), 151 to 171 (IVVGGLAGAMPPLLGWTAVTG), 177 to 197 (ALLLVIIIFAWTPPHFWALAI), 223 to 243 (CIFLYTILLAIACLLPVLVGM), 244 to 264 (CGPVYLVSSTLLSVTFIYKAW), and 281 to 301 (FSIYHLMLLFIALLVDHYLWL).

The protein belongs to the UbiA prenyltransferase family. Protoheme IX farnesyltransferase subfamily.

It is found in the cell inner membrane. The enzyme catalyses heme b + (2E,6E)-farnesyl diphosphate + H2O = Fe(II)-heme o + diphosphate. It functions in the pathway porphyrin-containing compound metabolism; heme O biosynthesis; heme O from protoheme: step 1/1. In terms of biological role, converts heme B (protoheme IX) to heme O by substitution of the vinyl group on carbon 2 of heme B porphyrin ring with a hydroxyethyl farnesyl side group. The protein is Protoheme IX farnesyltransferase of Shewanella halifaxensis (strain HAW-EB4).